The primary structure comprises 264 residues: tRNA (guanine-N(1)-)-methyltransferase (264 aa).

S-adenosyl-L-methionine contacts are provided by residues G125 and 145–150 (LGDFVL).

It belongs to the RNA methyltransferase TrmD family. As to quaternary structure, homodimer.

Its subcellular location is the cytoplasm. It catalyses the reaction guanosine(37) in tRNA + S-adenosyl-L-methionine = N(1)-methylguanosine(37) in tRNA + S-adenosyl-L-homocysteine + H(+). Functionally, specifically methylates guanosine-37 in various tRNAs. The sequence is that of tRNA (guanine-N(1)-)-methyltransferase from Burkholderia ambifaria (strain MC40-6).